Consider the following 213-residue polypeptide: MAGRHALVWLRADAPSQALTPGAQPRLQAWFAAGFPAVVARRDGAEQPGQVRLGVPLPPAQGKQRIALCAQVSDIARSVPALALPEVISHAPPQWQAALHALQAQATAIGMQPRVFGSFAFQAVTGLPYVHAASDVDLLWTLDTPTQAHAVVTLLQQWEHVTARRADGELLLPDGNAVNWREYAGDAQQVLVKRNDGCRLLPRTALFPERCAA.

Active-site residues include D135 and D137.

This sequence belongs to the MdcG family.

The catalysed reaction is apo-[malonate decarboxylase ACP] + 2'-(5''-triphospho-alpha-D-ribosyl)-3'-dephospho-CoA = holo-[malonate decarboxylase ACP] + diphosphate. Transfers 2'-(5-triphosphoribosyl)-3'-dephosphocoenzyme-A to the apo-[acyl-carrier-protein] of the malonate decarboxylase to yield holo-[acyl-carrier-protein]. The sequence is that of Phosphoribosyl-dephospho-CoA transferase from Xanthomonas campestris pv. campestris (strain ATCC 33913 / DSM 3586 / NCPPB 528 / LMG 568 / P 25).